Reading from the N-terminus, the 454-residue chain is (Z)-3-hexen-1-ol acetyltransferase (454 aa).

Active-site proton acceptor residues include histidine 174 and aspartate 389.

The protein belongs to the plant acyltransferase family. As to expression, expressed in leaves and stems. Lower levels in flowers and barely detected in roots and siliques.

The enzyme catalyses (3Z)-hex-3-en-1-ol + acetyl-CoA = (3Z)-hex-3-en-1-yl acetate + CoA. Its activity is regulated as follows. Inhibited by magnesium, calcium, cobalt, zinc and copper. In terms of biological role, acyltransferase involved in the production of green leaf volatiles (GLVs). Uses acetyl-CoA as substrate, but not malonyl-CoA or benzoyl-CoA. Prefers primary, medium-chain-length, aliphatic alcohols. The polypeptide is (Z)-3-hexen-1-ol acetyltransferase (CHAT) (Arabidopsis thaliana (Mouse-ear cress)).